The chain runs to 1411 residues: DNA-directed RNA polymerase subunit beta' (1411 aa).

Cys69, Cys71, Cys84, and Cys87 together coordinate Zn(2+). Residues Asp461, Asp463, and Asp465 each coordinate Mg(2+). Positions 809, 883, 890, and 893 each coordinate Zn(2+).

Belongs to the RNA polymerase beta' chain family. As to quaternary structure, the RNAP catalytic core consists of 2 alpha, 1 beta, 1 beta' and 1 omega subunit. When a sigma factor is associated with the core the holoenzyme is formed, which can initiate transcription. Mg(2+) serves as cofactor. The cofactor is Zn(2+).

It carries out the reaction RNA(n) + a ribonucleoside 5'-triphosphate = RNA(n+1) + diphosphate. In terms of biological role, DNA-dependent RNA polymerase catalyzes the transcription of DNA into RNA using the four ribonucleoside triphosphates as substrates. The polypeptide is DNA-directed RNA polymerase subunit beta' (Ehrlichia ruminantium (strain Gardel)).